We begin with the raw amino-acid sequence, 92 residues long: Elongation factor 1-beta (92 aa).

The protein belongs to the EF-1-beta/EF-1-delta family.

Functionally, promotes the exchange of GDP for GTP in EF-1-alpha/GDP, thus allowing the regeneration of EF-1-alpha/GTP that could then be used to form the ternary complex EF-1-alpha/GTP/AAtRNA. The protein is Elongation factor 1-beta of Hyperthermus butylicus (strain DSM 5456 / JCM 9403 / PLM1-5).